Here is a 63-residue protein sequence, read N- to C-terminus: Kappa-theraphotoxin-Gr3a (63 aa).

Positions 1 to 21 (MKTSVFVLVLGLVLLFAVSFA) are cleaved as a signal peptide. Residues 22–29 (TEMEESAR) constitute a propeptide that is removed on maturation. Intrachain disulfides connect cysteine 31–cysteine 45, cysteine 38–cysteine 50, and cysteine 44–cysteine 57.

It belongs to the neurotoxin 10 (Hwtx-1) family. 63 (VsTx1) subfamily. Expressed by the venom gland.

Its subcellular location is the secreted. Its function is as follows. Inhibits sodium channels Nav1.7/SCN9A and potassium channels Kv11.1/KCNH2. Also binds the voltage-sensor domain of the potassium channel KvAP (from the archaeon Aeropyrum pernix) with very slow apparent binding kinetics and affects channel gating. Reaches its target by dynamically partitioning into anionic or zwitterionic headgroup lipid membranes. May bind to the open state of KvAP. The sequence is that of Kappa-theraphotoxin-Gr3a from Grammostola rosea (Chilean rose tarantula).